A 280-amino-acid chain; its full sequence is Protein FAM131C (280 aa).

The tract at residues 195 to 280 (QDSLPSGPSQ…LWEEDEVFYN (86 aa)) is disordered. A compositionally biased stretch (polar residues) spans 197–211 (SLPSGPSQDDSLQAF). Residues 215–227 (SPSPDSCPSPEEP) show a composition bias toward pro residues.

The protein belongs to the FAM131 family.

The chain is Protein FAM131C (FAM131C) from Homo sapiens (Human).